The sequence spans 196 residues: FAD-linked sulfhydryl oxidase ERV2 (196 aa).

The Cytoplasmic segment spans residues 1 to 12 (MKQIVKRSHAIR). A helical; Signal-anchor transmembrane segment spans residues 13–35 (IVAALGIIGLWMFFSSNELSIAT). Residues 36–196 (PGLIKAKSGI…SLEKEAKQHG (161 aa)) lie on the Lumenal side of the membrane. The ERV/ALR sulfhydryl oxidase domain occupies 72–174 (MGDDKVKKEV…YDCATILEDY (103 aa)). FAD contacts are provided by lysine 78, arginine 83, and tryptophan 86. Cysteines 121 and 124 form a disulfide. Residues histidine 127, cysteine 150, histidine 153, asparagine 157, lysine 162, and tyrosine 174 each contribute to the FAD site. An intrachain disulfide couples cysteine 150 to cysteine 167. A disulfide bridge connects residues cysteine 176 and cysteine 178.

In terms of assembly, homodimer. Interacts with the substrate protein PDI1, forming transient intermolecular disulfide bridges. The cofactor is FAD.

Its subcellular location is the endoplasmic reticulum membrane. It catalyses the reaction 2 R'C(R)SH + O2 = R'C(R)S-S(R)CR' + H2O2. Its function is as follows. FAD-dependent sulfhydryl oxidase that catalyzes disulfide bond formation in the endoplasmic reticulum lumen in parallel to ERO1. In Saccharomyces cerevisiae (strain ATCC 204508 / S288c) (Baker's yeast), this protein is FAD-linked sulfhydryl oxidase ERV2 (ERV2).